A 617-amino-acid polypeptide reads, in one-letter code: MAEAKTHWLGAALSLIPLIFLISGAEAASFQRNQLLQKEPDLRLENVQKFPSPEMIRALEYIENLRQQAHKEESSPDYNPYQGVSVPLQQKENGDESHLPERDSLSEEDWMRIILEALRQAENEPQSAPKENKPYALNSEKNFPMDMSDDYETQQWPERKLKHMQFPPMYEENSRDNPFKRTNEIVEEQYTPQSLATLESVFQELGKLTGPNNQKRERMDEEQKLYTDDEDDIYKANNIAYEDVVGGEDWNPVEEKIESQTQEEVRDSKENIEKNEQINDEMKRSGQLGIQEEDLRKESKDQLSDDVSKVIAYLKRLVNAAGSGRLQNGQNGERATRLFEKPLDSQSIYQLIEISRNLQIPPEDLIEMLKTGEKPNGSVEPERELDLPVDLDDISEADLDHPDLFQNRMLSKSGYPKTPGRAGTEALPDGLSVEDILNLLGMESAANQKTSYFPNPYNQEKVLPRLPYGAGRSRSNQLPKAAWIPHVENRQMAYENLNDKDQELGEYLARMLVKYPEIINSNQVKRVPGQGSSEDDLQEEEQIEQAIKEHLNQGSSQETDKLAPVSKRFPVGPPKNDDTPNRQYWDEDLLMKVLEYLNQEKAEKGREHIAKRAMENM.

The N-terminal stretch at 1–27 (MAEAKTHWLGAALSLIPLIFLISGAEA) is a signal peptide. Positions 28-30 (ASF) are excised as a propeptide. A disordered region spans residues 120 to 143 (QAENEPQSAPKENKPYALNSEKNF). Y151 carries the post-translational modification Sulfotyrosine. S174 is modified (phosphoserine). Residues 182-200 (TNEIVEEQYTPQSLATLES) are O-glycosylated at one site. 2 stretches are compositionally biased toward basic and acidic residues: residues 257–284 (IESQ…EMKR) and 293–302 (EDLRKESKDQ). Residues 257–302 (IESQTQEEVRDSKENIEKNEQINDEMKRSGQLGIQEEDLRKESKDQ) form a disordered region. A Phosphoserine modification is found at S268. A phosphoserine mark is found at S432, S532, S555, and S556. Residues 552-583 (NQGSSQETDKLAPVSKRFPVGPPKNDDTPNRQ) form a disordered region.

This sequence belongs to the chromogranin/secretogranin protein family. In terms of assembly, interacts with Secretogranin III/SCG3. In terms of processing, O-glycosylated.

It localises to the secreted. In terms of biological role, neuroendocrine protein of the granin family that regulates the biogenesis of secretory granules. The polypeptide is Secretogranin-2 (SCG2) (Homo sapiens (Human)).